The following is an 85-amino-acid chain: Beta-mammal/insect toxin Lqhb1 (85 aa).

An N-terminal signal peptide occupies residues 1 to 19; that stretch reads MKIIIFLIVSSLMLIGVKT. Positions 20–82 constitute an LCN-type CS-alpha/beta domain; the sequence is DNGYLLNKAT…LWAYATNKCN (63 aa). Disulfide bonds link cysteine 31–cysteine 81, cysteine 35–cysteine 56, cysteine 42–cysteine 63, and cysteine 46–cysteine 65.

This sequence belongs to the long (4 C-C) scorpion toxin superfamily. Sodium channel inhibitor family. As to expression, expressed by the venom gland.

It is found in the secreted. Its function is as follows. Beta toxins bind voltage-independently at site-4 of sodium channels (Nav) and shift the voltage of activation toward more negative potentials thereby affecting sodium channel activation and promoting spontaneous and repetitive firing. Competes, with apparent high affinity, with anti-insect and anti-mammalian beta-toxins for binding to cockroach and rat brain synaptosomes, respectively. Also competes with an anti-mammalian alpha-toxin on binding to rat brain sodium channels. Has a weak effect on cardiac sodium channels and a marked effect on rat brain and skeletal muscle sodium channels. This chain is Beta-mammal/insect toxin Lqhb1, found in Leiurus hebraeus (Hebrew deathstalker scorpion).